Consider the following 200-residue polypeptide: Glutathione S-transferase domain-containing protein DDB_G0273153/DDB_G0273923 (200 aa).

The region spanning 1-71 (MISSIYIFKI…YISNNHNFSG (71 aa)) is the GST N-terminal domain. The GST C-terminal domain maps to 73 to 195 (SLQESARVDD…INSNNINSQS (123 aa)).

This sequence belongs to the GST superfamily.

This chain is Glutathione S-transferase domain-containing protein DDB_G0273153/DDB_G0273923, found in Dictyostelium discoideum (Social amoeba).